A 311-amino-acid chain; its full sequence is Olfactory receptor 1N1 (311 aa).

At M1–Q23 the chain is on the extracellular side. Residue N3 is glycosylated (N-linked (GlcNAc...) asparagine). The chain crosses the membrane as a helical span at residues S24–I47. Residues G48 to T55 are Cytoplasmic-facing. A helical transmembrane segment spans residues P56–T77. At K78–Q98 the chain is on the extracellular side. A disulfide bridge links C95 with C187. The helical transmembrane segment at M99–Y118 threads the bilayer. Over D119–Q137 the chain is Cytoplasmic. Residues V138–T156 form a helical membrane-spanning segment. Topologically, residues H157–E194 are extracellular. The chain crosses the membrane as a helical span at residues M195–I217. The Cytoplasmic segment spans residues H218–K234. The chain crosses the membrane as a helical span at residues A235 to Y257. The Extracellular segment spans residues L258–I270. Residues A271–L290 traverse the membrane as a helical segment. Topologically, residues R291 to S311 are cytoplasmic.

The protein belongs to the G-protein coupled receptor 1 family.

The protein localises to the cell membrane. In terms of biological role, odorant receptor. In Homo sapiens (Human), this protein is Olfactory receptor 1N1 (OR1N1).